The primary structure comprises 126 residues: Fluoride-specific ion channel FluC (126 aa).

4 helical membrane passes run 4–24 (LLLVCLGGALGSGARYLTSAW), 36–56 (GTLLVNVSGSFLLAGIMTASL), 67–85 (LFLAAGVMGGFTTYSSFNY), and 101–121 (AYLLATVLGCLAAAFAATLLV). Na(+) is bound by residues Gly75 and Thr78.

This sequence belongs to the fluoride channel Fluc/FEX (TC 1.A.43) family.

It localises to the cell inner membrane. The catalysed reaction is fluoride(in) = fluoride(out). Na(+) is not transported, but it plays an essential structural role and its presence is essential for fluoride channel function. In terms of biological role, fluoride-specific ion channel. Important for reducing fluoride concentration in the cell, thus reducing its toxicity. The sequence is that of Fluoride-specific ion channel FluC from Anaeromyxobacter dehalogenans (strain 2CP-1 / ATCC BAA-258).